The chain runs to 1627 residues: MQKIQHVQPGLSTSEIAPATLAKTSLSQGNSTSASQKGAQSLIQQGLHDKNKPPELEQGNGSSVRSQDSRSTTLRELFSSEGASQSAPRAPRDSLASGGPIQSLPRFASAEAAEIKISGSTTSTPAAKSDITLDSHGKLQFGKGLPEALTTLLQQTIGKNSQPFVAHHENQDAQQHALADKSGRLFVIQSDDNQHIALHSSGRSAMPAGKLSSNNVQLESTPERIALKTTAGESTSMPLSGRMNHELLTGVHRQPTSASGAGEQLRLHDGKLFALNTEFGVWQQSSDVAHSQLSRQGDGQLYAVKDDHTLSNLSSGTASSTFSDKITAFSANQNGQSAVLTEQDHLTQLHLMSTLDATPQPVALKLENGDPVFAKAVNLTAEHLLIADNDGKLYHAPLPKAGEPHATLTPASTPELNAVLGDDHRITGFAHDEHGQTQALATDRQGQKHVAPLGQNGLSPTPGWNLSDSLVVDNKLGLTTAAPEAKDTLDLGRLGQIGLQEGKVHFYNGNTKNWEASSVEASQLKRGLDNQAYTLKDGEIKPLSINQKSDTFAHGDNTVFALPQVRMTPSAGTALPGIDKDDGVSAMAVINRNKFIAVDKQGDLHFHQIKPGTDKIAAPPLALPKNGLSGEIQDITLDHQQTLFALNKDGQLFQLPKTDWQNAANHDSAQWQPVKTPVEGKVSSLGTDAQHHLQIAHDDHELHTQQGNAWKTTVPKGEAPLPAEPRDAETVFGRLDVATKGMKIPLTGVTVKADFQVLGKTGEDSQQVKSKLSDLLRAHLVSFTLDMPRPIKTFADHVQHQLNGREGLKPVYDMQTELLKKLDATTSQPQGTVTDLATKIDKLDLGDKGKPLVNLLKQFHTELESSSAKAALLIGRQQGVVNDNGVMNTEGKPASLHSREKDLAPVLLAAMESHPSSKTSTAATLLKTFVDSKTPIAQKPNSEAFGQQRDTSDALSLAKTRLVLDTLALGDLHKLTDRIGALSGTSPGEAALASMMKELNAMRQGNYGENPVKKMTDMGFTNHKSLEADYDSVKTFMKAFRKEDNAVSVTSKTVMQAASQTDMIDKMKSTVLSLDSNESIAFNRTYGGGASMSFVVSGTPLPFPPVPGGGVSGERNYNLSFSRGENGINVAFERSGGITGKVSYSGGYDVSEYLTGKTSAQMTQDINSKHSFAPDVRASFGVSASLQVAQQNALNFTLSEEELPGFIDGLSSGTINPLALLDKGEQHSVKAGKTVSFNLDGNAALELRGGINLTEKGAAPTSATLRGSVGVTASANVLSATSSSSVAQGEKSTTYTESDNRLRFMNQAAMGANATLSAGAARTTPDGTVPFFTSASIGVNVAADSRTNQSISLGMKKAEPLEKKDIDALTKTLNSAFNDPASQLLIDGVKKMAEPDDQLAILNTHFADKTAKTDDQHQGLMSLKKLNVRQDVAQRDGATLDSVKHTTSYTNLSKLTENGLFQVIGNHLFSSLPPSNADRINQLIADNPALKDIVSRLQDNDRASVTVSLELKDDVREKIEKGIQNKTHGKDDVIALFKDGNNLRLASIEVSKAVKKSEGFNTPAVIINASSRAGVSMNKLLGNVSFSYGQDQTVPQSYKLSGEIAKANPATTNALQQLQQEGLQLNG.

2 stretches are compositionally biased toward polar residues: residues 22-44 and 59-74; these read AKTS…SLIQ and GNGS…STTL. 2 disordered regions span residues 22 to 102 and 436 to 464; these read AKTS…GPIQ and QTQA…TPGW. Short sequence motifs (wxxxE) lie at residues 464–468, 514–520, and 660–667; these read WNLSD, WEASSVE, and WQNAANHD.

It belongs to the AvrE family.

The protein resides in the secreted. Its subcellular location is the host cell. In terms of biological role, major virulence factor that may function as a water- and solute-permeable channel dedicated to creating osmotic/water potential perturbation and a water- and nutrient-rich apoplast in which bacteria multiply within the infected plant tissues. Functionally, required for plant cell death in N.benthamiana leaves and leaf cell death in S.tuberosum. Essential for pathogenicity. Does not suppress callose formation. In Pectobacterium carotovorum (Erwinia carotovora), this protein is Type III effector DspE.